Here is a 1165-residue protein sequence, read N- to C-terminus: MTCPKFSVALLHWEFIYVITAFDLAYPITPWKFKLSCMPPNTTYDFLLPAGISKNTSTLNGHDEAVVETELNSSGTYLSNLSSKTTFHCCFWSEEDKNCSVHADNIAGKAFVSAVNSLVFQQTGANWNIQCWMKEDLKLFICYMESLFKNPFKNYDLKVHLLYVLLEVLEGSPLLPQKGSFQSVQCNCSARECCECHVPVSAAKLNYTLLMYLKITSGGAVFHSPLMSVQPINVVKPDPPLGLHMEITDTGNLKISWSSPTLVPFQLQYQVKYSENSTTNMREADEIVSDTSLLVDSVLPGSSYEVQVRGKRLDGPGIWSDWSTPFTFTTQDVIYFPPKILTSVGSNISFHCIYKNENKIVSSKKIVWWMNLAEKIPQSQYDVVGDHVSKVTFPNMNATKPRGKFTYDAVYCCNEHECHHRYAELYVIDVNINISCETDGYLTKMTCRWSTNAIQSLVGSTLQLRYHRSSLYCSDVPSVHPISEPKDCQLQRDGFYECIFQPIFLLSGYTMWIRINHPLGSLDSPPTCVIPDSVVKPLPPSSVKAEITAKIGLLKISWEKPVFPENNLQFQIRYGLSGKEVQWKIYEVYDTKLKSTSLPVPDLCAVYAVQVRCKRLDGLGYWSNWSTPAYTVVTDVKVPIRGPEFWRIINEDATKKERNITLLWKPLMKNDSLCSVRSYVVKHHTSRHGTWSEDVGNHTKLTFLWTEQAHSVTVLAVNSIGASSANFNLTFSWPMSKVNIVQSLSAYPLNSSCVGLSWLLSPSDYNLMYFILEWKILNEDHEIKWLRIPSSVKKYYIHDHFIPIEKYQFSLYPIFMEGVGKPKIINSFTQDGEKHRNDAGLYVIVPIIISSSILLLGTLLMSHQRMKKLFWEDVPNPKNCSWAQGLNFQKPETFEHLFIKHTESVTFGPLLLEPETISEDISVDTSWKNKDEMVPPTTVSLLLTTPDLEKSSICISDQRSSAHFSEAESMEITREDENRRQPSIKYATLLSSPKSGETEQEQELVSSLVSRCFSSSNSLPKESFSNSSWEIETQAFFILSDQHPNMTSPHLSFSEGLDELMKFEGNFPKEHNDERSVYYLGVTSIKKRESDVFLTDESRVRCPFPAHCLFADIKILQESCSHLVENNFNLGTSGQKTFVSYMPQFQTCSTQTQKIMENKMYDLTV.

An N-terminal signal peptide occupies residues 1–21 (MTCPKFSVALLHWEFIYVITA). At 22–838 (FDLAYPITPW…TQDGEKHRND (817 aa)) the chain is on the extracellular side. 5 disulfides stabilise this stretch: cysteine 37–cysteine 90, cysteine 89–cysteine 99, cysteine 131–cysteine 142, cysteine 186–cysteine 196, and cysteine 188–cysteine 193. N-linked (GlcNAc...) asparagine glycans are attached at residues asparagine 41, asparagine 55, asparagine 72, asparagine 80, and asparagine 98. N-linked (GlcNAc...) asparagine glycosylation is present at asparagine 187. Asparagine 206, asparagine 276, asparagine 347, and asparagine 397 each carry an N-linked (GlcNAc...) asparagine glycan. Residues 239–332 (PPLGLHMEIT…STPFTFTTQD (94 aa)) enclose the Fibronectin type-III 1 domain. 2 disulfide bridges follow: cysteine 352/cysteine 412 and cysteine 413/cysteine 418. Asparagine 433 carries N-linked (GlcNAc...) asparagine glycosylation. 3 cysteine pairs are disulfide-bonded: cysteine 436-cysteine 447, cysteine 473-cysteine 528, and cysteine 488-cysteine 498. Positions 467-484 (HRSSLYCSDVPSVHPISE) are leptin-binding. Fibronectin type-III domains are found at residues 539-634 (PPSS…TVVT), 642-736 (GPEF…WPMS), and 740-834 (IVQS…DGEK). A WSXWS motif motif is present at residues 622–626 (WSNWS). Residues asparagine 624, asparagine 659, asparagine 670, asparagine 697, asparagine 728, and asparagine 750 are each glycosylated (N-linked (GlcNAc...) asparagine). A helical membrane pass occupies residues 839-861 (AGLYVIVPIIISSSILLLGTLLM). At 862-1165 (SHQRMKKLFW…MENKMYDLTV (304 aa)) the chain is on the cytoplasmic side. The short motif at 870 to 878 (FWEDVPNPK) is the Box 1 motif element. The residue at position 881 (serine 881) is a Phosphoserine. Residues 892 to 897 (ETFEHL) form a required for JAK2 activation region. Positions 897 to 905 (LFIKHTESV) are required for STAT3 phosphorylation. Tyrosine 986 bears the Phosphotyrosine; by JAK2 mark. At tyrosine 1079 the chain carries Phosphotyrosine. Tyrosine 1141 bears the Phosphotyrosine; by JAK2 mark.

This sequence belongs to the type I cytokine receptor family. Type 2 subfamily. In terms of assembly, present as a mixture of monomers and dimers. The phosphorylated receptor binds a number of SH2 domain-containing proteins such as JAK2, STAT3, PTPN11, and SOCS3. Interaction with SOCS3 inhibits JAK/STAT signaling and MAPK cascade. Post-translationally, on ligand binding, phosphorylated on two conserved C-terminal tyrosine residues by JAK2. Tyr-986 is required for complete binding and activation of PTPN11, ERK/FOS activation,for interaction with SOCS3 and SOCS3 mediated inhibition of leptin signaling. Phosphorylation on Tyr-1141 is required for STAT3 binding/activation. Phosphorylation of Tyr-1079 has a more accessory role. As to expression, kidney, liver, spleen, lung, brain, testis, uterus, ovary, corpus luteum, theca and granulosa cells.

It localises to the cell membrane. The protein resides in the basolateral cell membrane. Receptor for hormone LEP/leptin. On ligand binding, mediates LEP central and peripheral effects through the activation of different signaling pathways such as JAK2/STAT3 and MAPK cascade/FOS. In the hypothalamus, LEP acts as an appetite-regulating factor that induces a decrease in food intake and an increase in energy consumption by inducing anorexinogenic factors and suppressing orexigenic neuropeptides, also regulates bone mass and secretion of hypothalamo-pituitary-adrenal hormones. In the periphery, increases basal metabolism, influences reproductive function, regulates pancreatic beta-cell function and insulin secretion, is pro-angiogenic and affects innate and adaptive immunity. Control of energy homeostasis and melanocortin production (stimulation of POMC and full repression of AgRP transcription) is mediated by STAT3 signaling, whereas distinct signals regulate NPY and the control of fertility, growth and glucose homeostasis. Involved in the regulation of counter-regulatory response to hypoglycemia by inhibiting neurons of the parabrachial nucleus. Has a specific effect on T lymphocyte responses, differentially regulating the proliferation of naive and memory T-cells. Leptin increases Th1 and suppresses Th2 cytokine production. The polypeptide is Leptin receptor (LEPR) (Sus scrofa (Pig)).